Reading from the N-terminus, the 343-residue chain is Methionine import ATP-binding protein MetN (343 aa).

Positions 2–241 (IKLSNITKVF…PKTPLAQKFI (240 aa)) constitute an ABC transporter domain. Position 38–45 (38–45 (GASGAGKS)) interacts with ATP.

The protein belongs to the ABC transporter superfamily. Methionine importer (TC 3.A.1.24) family. As to quaternary structure, the complex is composed of two ATP-binding proteins (MetN), two transmembrane proteins (MetI) and a solute-binding protein (MetQ).

The protein localises to the cell inner membrane. It catalyses the reaction L-methionine(out) + ATP + H2O = L-methionine(in) + ADP + phosphate + H(+). The enzyme catalyses D-methionine(out) + ATP + H2O = D-methionine(in) + ADP + phosphate + H(+). Its function is as follows. Part of the ABC transporter complex MetNIQ involved in methionine import. Responsible for energy coupling to the transport system. This chain is Methionine import ATP-binding protein MetN, found in Escherichia coli O157:H7.